Reading from the N-terminus, the 1942-residue chain is Myosin-2 (1942 aa).

The region spanning Asp33–Pro82 is the Myosin N-terminal SH3-like domain. Phosphothreonine is present on residues Thr64 and Thr69. The Myosin motor domain occupies Asp86–Asp785. Gly179–Thr186 lines the ATP pocket. Phosphotyrosine is present on Tyr389. Position 419 is a phosphothreonine (Thr419). Residue Ser625 is modified to Phosphoserine. Positions Leu662 to Glu684 are actin-binding. His760 is subject to Pros-methylhistidine. The region spanning Leu788 to Ser817 is the IQ domain. Residues Ser849 to Lys1930 are a coiled coil. Phosphoserine occurs at positions 1095 and 1099. The tract at residues Glu1130 to Glu1175 is disordered. Basic and acidic residues predominate over residues Ala1131 to Glu1159. Ser1165 and Ser1240 each carry phosphoserine. Thr1244 is subject to Phosphothreonine. Residue Ser1246 is modified to Phosphoserine. Thr1258 is modified (phosphothreonine). At Ser1264 the chain carries Phosphoserine. Thr1289 carries the phosphothreonine modification. Ser1291, Ser1295, Ser1306, and Ser1309 each carry phosphoserine. Tyr1467 bears the Phosphotyrosine mark. Thr1470 carries the phosphothreonine modification. Ser1477 bears the Phosphoserine mark. Tyr1495 is modified (phosphotyrosine). Ser1498 is modified (phosphoserine). Residue Thr1504 is modified to Phosphothreonine. Ser1517 carries the phosphoserine modification. Phosphothreonine is present on Thr1520. 6 positions are modified to phosphoserine: Ser1557, Ser1577, Ser1603, Ser1606, Ser1717, and Ser1729. A phosphothreonine mark is found at Thr1733 and Thr1739. The residue at position 1742 (Ser1742) is a Phosphoserine.

It belongs to the TRAFAC class myosin-kinesin ATPase superfamily. Myosin family. Muscle myosin is a hexameric protein that consists of 2 heavy chain subunits (MHC), 2 alkali light chain subunits (MLC) and 2 regulatory light chain subunits (MLC-2). Interacts with GCSAM. In terms of tissue distribution, expressed in type 2a myofibers in the tibialis anterior and soleus muscles (at protein level).

Its subcellular location is the cytoplasm. It localises to the myofibril. Functionally, myosins are actin-based motor molecules with ATPase activity essential for muscle contraction. The chain is Myosin-2 from Mus musculus (Mouse).